The following is a 588-amino-acid chain: Adenine deaminase (588 aa).

It belongs to the metallo-dependent hydrolases superfamily. Adenine deaminase family. Homodimer. Mn(2+) serves as cofactor.

The enzyme catalyses adenine + H2O + H(+) = hypoxanthine + NH4(+). This chain is Adenine deaminase, found in Escherichia fergusonii (strain ATCC 35469 / DSM 13698 / CCUG 18766 / IAM 14443 / JCM 21226 / LMG 7866 / NBRC 102419 / NCTC 12128 / CDC 0568-73).